We begin with the raw amino-acid sequence, 361 residues long: Phosphoribosylformylglycinamidine cyclo-ligase (361 aa).

It belongs to the AIR synthase family.

Its subcellular location is the cytoplasm. The enzyme catalyses 2-formamido-N(1)-(5-O-phospho-beta-D-ribosyl)acetamidine + ATP = 5-amino-1-(5-phospho-beta-D-ribosyl)imidazole + ADP + phosphate + H(+). The protein operates within purine metabolism; IMP biosynthesis via de novo pathway; 5-amino-1-(5-phospho-D-ribosyl)imidazole from N(2)-formyl-N(1)-(5-phospho-D-ribosyl)glycinamide: step 2/2. The protein is Phosphoribosylformylglycinamidine cyclo-ligase of Bartonella quintana (strain Toulouse) (Rochalimaea quintana).